The sequence spans 603 residues: Protein regulator of cytokinesis 1 (603 aa).

The dimerization stretch occupies residues 1–341; it reads MRRSEVLADE…HLHDAEIVRL (341 aa). 5 coiled-coil regions span residues 34–65, 96–136, 211–246, 272–304, and 383–463; these read EQRLQRTEVVKKHIKDLLDRMIAEEESLRERL, ILQL…DILC, SLENIATLQKLLKQLEMKKSQNEAECEGLRTQIREL, RNALKLEVDRLEELKMQNIKQVIEKIRVELAQF, and GNLL…AEML. A spectrin-fold region spans residues 342–466; that stretch reads RNYYDVHKEL…QTEAEMLYGS (125 aa). Basic and acidic residues predominate over residues 447-459; sequence KQERQLKNKKQTE. Residues 447–502 are disordered; that stretch reads KQERQLKNKKQTEAEMLYGSTPRTPSKRPGQTPKKSGKMNTTTMSSATPNSSIRPV. Residues 467–603 form a unstructured, Arg/Lys rich region; it reads TPRTPSKRPG…RILNSTNIQS (137 aa). At T470 the chain carries Phosphothreonine; by CDK1. Positions 484–499 are enriched in polar residues; sequence KMNTTTMSSATPNSSI. A phosphoserine mark is found at S510 and S568. T575 is modified (phosphothreonine). The interval 583–603 is disordered; sequence LSKASRSDATSRILNSTNIQS. Over residues 589 to 603 the composition is skewed to polar residues; the sequence is SDATSRILNSTNIQS. Phosphothreonine; by PLK1 is present on T599.

Belongs to the MAP65/ASE1 family. As to quaternary structure, homodimer. Interacts with the C-terminal Rho-GAP domain and the basic region of RACGAP1. The interaction with RACGAP1 inhibits its GAP activity towards CDC42 in vitro, which may be required for maintaining normal spindle morphology. Interacts (via N-terminus) with the C-terminus of CENPE (via C-terminus); the interaction occurs during late mitosis. Interacts (via N-terminus) with KIF4A (via C-terminus); the interaction is required for the progression of mitosis. Interacts (via N-terminus) with KIF23 (via C-terminus); the interaction occurs during late mitosis. Interacts with KIF14 and KIF20A. Interacts with PLK1. Interacts with KIF20B. Interacts with CCDC66. In terms of processing, phosphorylation by CDK1 in early mitosis holds PRC1 in an inactive monomeric state, during the metaphase to anaphase transition, PRC1 is dephosphorylated, promoting interaction with KIF4A, which then translocates PRC1 along mitotic spindles to the plus ends of antiparallel interdigitating microtubules. Dephosphorylation also promotes MT-bundling activity by allowing dimerization. Phosphorylation by CDK1 prevents PLK1-binding: upon degradation of CDK1 at anaphase and dephosphorylation, it is then phosphorylated by PLK1, leading to cytokinesis.

The protein localises to the nucleus. It is found in the cytoplasm. Its subcellular location is the cytoskeleton. It localises to the spindle pole. The protein resides in the midbody. Functionally, key regulator of cytokinesis that cross-links antiparrallel microtubules at an average distance of 35 nM. Essential for controlling the spatiotemporal formation of the midzone and successful cytokinesis. Required for KIF14 localization to the central spindle and midbody. Required to recruit PLK1 to the spindle. Stimulates PLK1 phosphorylation of RACGAP1 to allow recruitment of ECT2 to the central spindle. Acts as an oncogene for promoting bladder cancer cells proliferation, apoptosis inhibition and carcinogenic progression. This is Protein regulator of cytokinesis 1 from Mus musculus (Mouse).